Consider the following 554-residue polypeptide: MRSDVIKKGLERAPHRSLLKALGITDDEMRRPFIGIVSSWNEIIPGHVHLDKVVEAVKAGVRMAGGVPFVFPTIGICDGIAMDHRGMKFSLPSRELIADSIEIVASGFPFDGLVFVPNCDKITPGMMMAMGRLNIPSVLISGGPMLAGRYNGRDIDLITVFEAVGGYKVGKVDEETLKAIEDLACPGAGSCAGLFTANTMNSLAEALGIAPRGNGTVPAVHAKRLRMAKEAGILVVELVKRDIKPRDIVTLDSFMNAVMVDLATGGSTNTVLHLKAIAESFGIDFDIKLFDELSRKIPHICNISPVGPYHIQDLDDAGGIYAVMKRLQENGLLKEDVMTIYLRKIGDLVREAKILNEDVIRPFDNPYHKEGGLGILFGNLAPEGAVAKLSGVPEKMMHHVGPAVVFEDGEEATKAILSGKIKKGDVVVIRYEGPKGGPGMREMLSPTSAIVGMGLAEDVALITDGRFSGGSHGAVIGHVSPEAAEGGPIGIVKDGDLIEIDFEKRTLNLLISDEEFERRMKEFTPLVKEVDSDYLRRYAFFVQSASKGATFRKP.

Asp-78 serves as a coordination point for Mg(2+). Cys-119 is a [2Fe-2S] cluster binding site. 2 residues coordinate Mg(2+): Asp-120 and Lys-121. Residue Lys-121 is modified to N6-carboxylysine. Cys-191 is a binding site for [2Fe-2S] cluster. Glu-442 contributes to the Mg(2+) binding site. Catalysis depends on Ser-468, which acts as the Proton acceptor.

Belongs to the IlvD/Edd family. In terms of assembly, homodimer. [2Fe-2S] cluster serves as cofactor. The cofactor is Mg(2+).

The enzyme catalyses (2R)-2,3-dihydroxy-3-methylbutanoate = 3-methyl-2-oxobutanoate + H2O. It carries out the reaction (2R,3R)-2,3-dihydroxy-3-methylpentanoate = (S)-3-methyl-2-oxopentanoate + H2O. It functions in the pathway amino-acid biosynthesis; L-isoleucine biosynthesis; L-isoleucine from 2-oxobutanoate: step 3/4. The protein operates within amino-acid biosynthesis; L-valine biosynthesis; L-valine from pyruvate: step 3/4. In terms of biological role, functions in the biosynthesis of branched-chain amino acids. Catalyzes the dehydration of (2R,3R)-2,3-dihydroxy-3-methylpentanoate (2,3-dihydroxy-3-methylvalerate) into 2-oxo-3-methylpentanoate (2-oxo-3-methylvalerate) and of (2R)-2,3-dihydroxy-3-methylbutanoate (2,3-dihydroxyisovalerate) into 2-oxo-3-methylbutanoate (2-oxoisovalerate), the penultimate precursor to L-isoleucine and L-valine, respectively. The polypeptide is Dihydroxy-acid dehydratase (Thermotoga sp. (strain RQ2)).